A 521-amino-acid chain; its full sequence is Apolipoprotein N-acyltransferase (521 aa).

The next 6 helical transmembrane spans lie at 34–54, 64–84, 100–120, 137–157, 176–196, and 206–226; these read LAAPPTGWGVLVWVALVPLLV, AFWLGTLAGMVYYAILLRWLL, LAIALGAWLFVSASQAWVIGL, LFAVGLWVGLHWLWGQGETAF, VALGGAQLLVGLAVAVNALVA, and YAGLAALLAASVYLYGWWQLA. Residues 240–480 enclose the CN hydrolase domain; the sequence is IQGNIAQARK…YAAFVEPVRL (241 aa). Glu-281 acts as the Proton acceptor in catalysis. Residue Lys-341 is part of the active site. Cys-392 serves as the catalytic Nucleophile. Residues 488 to 508 form a helical membrane-spanning segment; it reads ALWGDWFVPLSAALALLGLIA.

Belongs to the CN hydrolase family. Apolipoprotein N-acyltransferase subfamily.

Its subcellular location is the cell inner membrane. It carries out the reaction N-terminal S-1,2-diacyl-sn-glyceryl-L-cysteinyl-[lipoprotein] + a glycerophospholipid = N-acyl-S-1,2-diacyl-sn-glyceryl-L-cysteinyl-[lipoprotein] + a 2-acyl-sn-glycero-3-phospholipid + H(+). It participates in protein modification; lipoprotein biosynthesis (N-acyl transfer). Functionally, catalyzes the phospholipid dependent N-acylation of the N-terminal cysteine of apolipoprotein, the last step in lipoprotein maturation. This chain is Apolipoprotein N-acyltransferase, found in Gloeobacter violaceus (strain ATCC 29082 / PCC 7421).